A 493-amino-acid polypeptide reads, in one-letter code: GPI alpha-1,6-mannosyltransferase 2 (493 aa).

Residues 1–13 (MWPQDPSRKEVLR) are Cytoplasmic-facing. A helical membrane pass occupies residues 14–34 (FAVSCRILTLMLQALFNAIIP). Topologically, residues 35–77 (DHHAEAFSPPRLAPSGFVDQLVEGLLGGLSHWDAEHFLFIAEH) are lumenal. A helical membrane pass occupies residues 78–98 (GYLYEHNFAFFPGFPLALLVG). Residues 99 to 113 (TELLRPLRGLLSLRS) lie on the Cytoplasmic side of the membrane. A helical membrane pass occupies residues 114–134 (CLLISVASLNFLFFMLAAVAL). Residues 135 to 136 (HD) are Lumenal-facing. A helical membrane pass occupies residues 137-157 (LGCLVLHCPHQSFYAALLFCL). Topologically, residues 158–161 (SPAN) are cytoplasmic. The chain crosses the membrane as a helical span at residues 162–182 (VFLAAGYSEALFALLTFSAMG). Residues 183-192 (QLERGRVWTS) lie on the Lumenal side of the membrane. The chain crosses the membrane as a helical span at residues 193-213 (VLLFAFATGVRSNGLVSVGFL). At 214-234 (MHSQCQGFFSSLTMLNPLRQL) the chain is on the cytoplasmic side. Residues 235–255 (FKLMASLFLSVFTLGLPFALF) traverse the membrane as a helical segment. Residues 256 to 327 (QYYAYTQFCL…KYYELKQVPN (72 aa)) lie on the Lumenal side of the membrane. The helical transmembrane segment at 328–348 (FLLAAPVAILVAWATWTYVTT) threads the bilayer. The Cytoplasmic portion of the chain corresponds to 349–378 (HPWLCLTLGLQRSKNNKTLEKPDLGFLSPQ). The helical transmembrane segment at 379–399 (VFVYVVHAAVLLLFGGLCMHV) threads the bilayer. Residues 400–469 (QVLTRFLGSS…HWKTCSPVTR (70 aa)) lie on the Lumenal side of the membrane. The chain crosses the membrane as a helical span at residues 470–490 (YILGYFLTYWLLGLLLHCNFL). Residues 491 to 493 (PWT) are Cytoplasmic-facing.

Belongs to the PIGV family. Post-translationally, not N-glycosylated.

The protein resides in the endoplasmic reticulum membrane. It functions in the pathway glycolipid biosynthesis; glycosylphosphatidylinositol-anchor biosynthesis. Its function is as follows. Alpha-1,6-mannosyltransferase that catalyzes the transfer of the second mannose, via an alpha-1,6 bond, from a dolichol-phosphate-mannose (Dol-P-Man) to the alpha-D-Man-(1-&gt;4)-alpha-D-GlcN-(1-&gt;6)-(1-radyl,2-acyl-sn-glycero-3-phospho)-2-acyl-inositol (also termed H2) intermediate to generate an alpha-D-Man-(1-&gt;6)-alpha-D-Man-(1-&gt;4)-alpha-D-GlcN-(1-&gt;6)-(1-radyl,2-acyl-sn-glycero-3-phospho)-2-acyl-inositol (also termed H3) and participates in the seventh step of the glycosylphosphatidylinositol-anchor biosynthesis. Also transfers the second mannose on a 2-PEtn-alpha-D-Man-(1-&gt;4)-alpha-D-GlcN-(1-&gt;6)-(1-radyl,2-acyl-sn-glycero-3-phospho)-2-acyl-inositol (also termed H5). The chain is GPI alpha-1,6-mannosyltransferase 2 from Homo sapiens (Human).